The primary structure comprises 226 residues: UPF0173 metal-dependent hydrolase Fnod_0635 (226 aa).

The protein belongs to the UPF0173 family.

The chain is UPF0173 metal-dependent hydrolase Fnod_0635 from Fervidobacterium nodosum (strain ATCC 35602 / DSM 5306 / Rt17-B1).